Consider the following 392-residue polypeptide: NADH-quinone oxidoreductase subunit D 1 (392 aa).

It belongs to the complex I 49 kDa subunit family. NDH-1 is composed of 14 different subunits. Subunits NuoB, C, D, E, F, and G constitute the peripheral sector of the complex.

It is found in the cell inner membrane. It carries out the reaction a quinone + NADH + 5 H(+)(in) = a quinol + NAD(+) + 4 H(+)(out). NDH-1 shuttles electrons from NADH, via FMN and iron-sulfur (Fe-S) centers, to quinones in the respiratory chain. The immediate electron acceptor for the enzyme in this species is believed to be a menaquinone. Couples the redox reaction to proton translocation (for every two electrons transferred, four hydrogen ions are translocated across the cytoplasmic membrane), and thus conserves the redox energy in a proton gradient. In Cytophaga hutchinsonii (strain ATCC 33406 / DSM 1761 / CIP 103989 / NBRC 15051 / NCIMB 9469 / D465), this protein is NADH-quinone oxidoreductase subunit D 1.